We begin with the raw amino-acid sequence, 428 residues long: 3-phosphoshikimate 1-carboxyvinyltransferase (428 aa).

The 3-phosphoshikimate site is built by Lys21, Ser22, and Arg26. Position 21 (Lys21) interacts with phosphoenolpyruvate. The phosphoenolpyruvate site is built by Gly93 and Arg121. 3-phosphoshikimate-binding residues include Ser166, Gln168, Asp314, and Lys341. Residue Gln168 participates in phosphoenolpyruvate binding. The active-site Proton acceptor is the Asp314. 2 residues coordinate phosphoenolpyruvate: Arg345 and Arg388.

The protein belongs to the EPSP synthase family. In terms of assembly, monomer.

Its subcellular location is the cytoplasm. The enzyme catalyses 3-phosphoshikimate + phosphoenolpyruvate = 5-O-(1-carboxyvinyl)-3-phosphoshikimate + phosphate. It functions in the pathway metabolic intermediate biosynthesis; chorismate biosynthesis; chorismate from D-erythrose 4-phosphate and phosphoenolpyruvate: step 6/7. Its function is as follows. Catalyzes the transfer of the enolpyruvyl moiety of phosphoenolpyruvate (PEP) to the 5-hydroxyl of shikimate-3-phosphate (S3P) to produce enolpyruvyl shikimate-3-phosphate and inorganic phosphate. The protein is 3-phosphoshikimate 1-carboxyvinyltransferase of Syntrophomonas wolfei subsp. wolfei (strain DSM 2245B / Goettingen).